Here is a 967-residue protein sequence, read N- to C-terminus: Kinesin heavy chain (967 aa).

In terms of domain architecture, Kinesin motor spans 8-326 (NIKVICRVRP…LLFGQRAKTI (319 aa)). 85 to 92 (GQTSSGKT) serves as a coordination point for ATP. The microtubule-binding stretch occupies residues 173-314 (VSSPEEVMEV…PASYNESETK (142 aa)). Disordered stretches follow at residues 387-411 (VPAESPATSTTSLAGGLIASMNEGD) and 923-967 (KPIR…ESKA). Residues 392–861 (PATSTTSLAG…RDNADLRCEL (470 aa)) adopt a coiled-coil conformation. A globular region spans residues 862–967 (PKLEKRLRAT…PIRMAPESKA (106 aa)). Residues 949–958 (QNGPMITSTP) show a composition bias toward polar residues.

The protein belongs to the TRAFAC class myosin-kinesin ATPase superfamily. Kinesin family. Kinesin subfamily. As to quaternary structure, oligomer composed of two heavy chains and two light chains. Interacts with amyloid-beta precursor-like protein (via cytoplasmic domain).

The protein resides in the cytoplasm. Its subcellular location is the cytoskeleton. It is found in the cell projection. The protein localises to the axon. Functionally, kinesin is a microtubule-associated force-producing protein that may play a role in organelle transport. The chain is Kinesin heavy chain from Doryteuthis pealeii (Longfin inshore squid).